The chain runs to 444 residues: MRNIIYFILSLLFSVTSYALETINIEHGRADPTPIAVNKFDADNSAADVLGHDMVKVISNDLKLSGLFRPISAASFIEEKTGIEYKPLFAAWRQINASLLVNGEVTKLESGKFQISFILWDTLLEKQLVGEILEVPKNLWRRAAHKIADKIYEKITGDAGYFDTKIVYVSESSSLPKIKRIALMDYDGANNKYLTNGKSLVLTPRFARSADKIFYVSYATKRRVLVYEKDLKTGKESVVGDFPGISFAPRFSPDGRKAVMSIAKNGSTHIYEIDLATKRLHKLTDGFGINTSPSYSPDGKKIVYNSDRNGVPQLYIMNSDGSDVQRISFGGGSYAAPSWSPRGDYIAFTKITKGDGGKTFNIGIMKACPQDDKNSERIITSGYLVESPCWSPNGRVIMFAKGWPSSAKAPGKNKIFAIDLTGHNEREIMTPADASDPEWSGVLN.

Residues 1–19 form the signal peptide; sequence MRNIIYFILSLLFSVTSYA.

This sequence belongs to the TolB family. The Tol-Pal system is composed of five core proteins: the inner membrane proteins TolA, TolQ and TolR, the periplasmic protein TolB and the outer membrane protein Pal. They form a network linking the inner and outer membranes and the peptidoglycan layer.

The protein resides in the periplasm. Part of the Tol-Pal system, which plays a role in outer membrane invagination during cell division and is important for maintaining outer membrane integrity. This chain is Tol-Pal system protein TolB, found in Rickettsia peacockii (strain Rustic).